The following is a 699-amino-acid chain: MSKINKLEHIRNIGICAHIDAGKTTTTERILYYTGKSHKIGEVHEGGATMDWMEQEQERGITITSAATTCRWQDKIINIIDTPGHVDFTIEVERSLRVLDGAVAVFDGVAGVEPQSETVWRQADKYNVPRMCFVNKMDRMGADFYRCVEMLKDRLGAKPLVIQLPVGIEENFKGIIDLIKMKAVIWKDEALGAEYFEEDIPADMKDKAEEYRAKLLDMVVELDDHVMEKYLSGEEVTAEEIKRLIRKGTISAAFYPVLCGSAFKNKGVQPLLDAVVDFLPSPIDIGIVKGMEVSTGEEKDFPISVTEPFAALRFKIMNDPFVGSLTFIRIYSGKITSGTTVINTVKNKREKIGRMLLMHANNREDVKEASAGDIVALAGLKDTTTGDTLSDIDQQVILERMEFPEPVIELAVEPKSTADQEKMGLALSRLAAEDPSFRVSTDYETGQTVIKGMGELHLEIIIDRMRREFKVEANIGAPQVAYRETITKVCEIDYTHKKQSGGAGQFARVKIIFEPLKEVKDLKDEDKNKNFVFESKIIGGAVPKEYIPGVEKGLNNIRETGVIAGYPMIDFKATLVDGAFHDVDSSVLAFEIAAKAAFREGMPKGNPKLLEPIMQVEVITPDEYMGDIIGDLNSRRGQIQSMDPRGNAQVVTANVPLAEMFGYVNTLRSLSQGRAQFSMIFSHYDQVPSQVADIIKAKK.

One can recognise a tr-type G domain in the interval 8 to 283 (EHIRNIGICA…AVVDFLPSPI (276 aa)). Residues 17–24 (AHIDAGKT), 81–85 (DTPGH), and 135–138 (NKMD) contribute to the GTP site.

This sequence belongs to the TRAFAC class translation factor GTPase superfamily. Classic translation factor GTPase family. EF-G/EF-2 subfamily.

It is found in the cytoplasm. In terms of biological role, catalyzes the GTP-dependent ribosomal translocation step during translation elongation. During this step, the ribosome changes from the pre-translocational (PRE) to the post-translocational (POST) state as the newly formed A-site-bound peptidyl-tRNA and P-site-bound deacylated tRNA move to the P and E sites, respectively. Catalyzes the coordinated movement of the two tRNA molecules, the mRNA and conformational changes in the ribosome. The protein is Elongation factor G of Rickettsia rickettsii.